The chain runs to 218 residues: MALVPYEETTEFGLQKFHKPLATFSFANHTIQIRQDWRHLGVAAVVWDAAIVLSTYLEMGAVELRGRSAVELGAGTGLVGIVAALLGAHVTITDRKVALEFLKSNVQANLPPHIQTKTVVKELTWGQNLGSFSPGEFDLILGADIIYLEETFTDLLQTLEHLCSNHSVILLACRIRYERDNNFLAMLERQFTVRKVHYDPEKDVHIYEAQKRNQKEDL.

Residues Trp-47, 73-75, Asp-94, Trp-125, and Ala-143 each bind S-adenosyl-L-methionine; that span reads GAG.

The protein belongs to the methyltransferase superfamily. METTL21 family. In terms of assembly, interacts with heat shock protein 70 family members; at least some of these proteins are methylation substrates.

The protein localises to the cytoplasm. It catalyses the reaction L-lysyl-[protein] + 3 S-adenosyl-L-methionine = N(6),N(6),N(6)-trimethyl-L-lysyl-[protein] + 3 S-adenosyl-L-homocysteine + 3 H(+). Its function is as follows. Protein-lysine methyltransferase that selectively trimethylates residues in heat shock protein 70 (HSP70) family members. Contributes to the in vivo trimethylation of Lys residues in HSPA1 and HSPA8. In vitro methylates 'Lys-561' in HSPA1, 'Lys-564' in HSPA2, 'Lys-585' in HSPA5, 'Lys-563' in HSPA6 and 'Lys-561' in HSPA8. In Homo sapiens (Human), this protein is Protein N-lysine methyltransferase METTL21A (METTL21A).